A 188-amino-acid polypeptide reads, in one-letter code: MATQPPQDQTSTTPSLPPHLDPTTYPRILTSATHNIHLELTYSTLNPTVALEHTSSPAAGANVLFLGTTRDTFEGRAVSQLSYTSYPPLALKSLMSIATRAVEKFDLKGVYIAHRLGVVPISEASIVVAVSAGHRGMAWKAAEEVLEEVKEKVEIWKREEFVDGGMEWRENRERDAEGRILSSTEGGK.

Residues 1 to 14 show a composition bias toward low complexity; it reads MATQPPQDQTSTTP. The tract at residues 1–23 is disordered; it reads MATQPPQDQTSTTPSLPPHLDPT. Substrate contacts are provided by residues 134 to 135, Lys150, and 157 to 159; these read HR and KRE.

Belongs to the MoaE family. MOCS2B subfamily. As to quaternary structure, heterotetramer; composed of 2 small (MOCS2A) and 2 large (MOCS2B) subunits.

It is found in the cytoplasm. The enzyme catalyses 2 [molybdopterin-synthase sulfur-carrier protein]-C-terminal-Gly-aminoethanethioate + cyclic pyranopterin phosphate + H2O = molybdopterin + 2 [molybdopterin-synthase sulfur-carrier protein]-C-terminal Gly-Gly + 2 H(+). It participates in cofactor biosynthesis; molybdopterin biosynthesis. Catalytic subunit of the molybdopterin synthase complex, a complex that catalyzes the conversion of precursor Z into molybdopterin. Acts by mediating the incorporation of 2 sulfur atoms from thiocarboxylated MOCS2A into precursor Z to generate a dithiolene group. The polypeptide is Molybdopterin synthase catalytic subunit (Aspergillus fumigatus (strain ATCC MYA-4609 / CBS 101355 / FGSC A1100 / Af293) (Neosartorya fumigata)).